The primary structure comprises 259 residues: Type III pantothenate kinase (259 aa).

6 to 13 is a binding site for ATP; sequence DVGNTNIV. Substrate contacts are provided by residues Y100 and 107–110; that span reads GADR. Catalysis depends on D109, which acts as the Proton acceptor. A K(+)-binding site is contributed by D129. Residue T132 coordinates ATP. T184 lines the substrate pocket.

Belongs to the type III pantothenate kinase family. As to quaternary structure, homodimer. NH4(+) serves as cofactor. K(+) is required as a cofactor.

The protein localises to the cytoplasm. The catalysed reaction is (R)-pantothenate + ATP = (R)-4'-phosphopantothenate + ADP + H(+). The protein operates within cofactor biosynthesis; coenzyme A biosynthesis; CoA from (R)-pantothenate: step 1/5. Its function is as follows. Catalyzes the phosphorylation of pantothenate (Pan), the first step in CoA biosynthesis. The polypeptide is Type III pantothenate kinase (Clostridium kluyveri (strain NBRC 12016)).